The primary structure comprises 181 residues: ATP-dependent protease subunit HslV (181 aa).

Thr-7 is a catalytic residue. The Na(+) site is built by Gly-164, Cys-167, and Thr-170.

It belongs to the peptidase T1B family. HslV subfamily. In terms of assembly, a double ring-shaped homohexamer of HslV is capped on each side by a ring-shaped HslU homohexamer. The assembly of the HslU/HslV complex is dependent on binding of ATP.

Its subcellular location is the cytoplasm. The catalysed reaction is ATP-dependent cleavage of peptide bonds with broad specificity.. With respect to regulation, allosterically activated by HslU binding. Functionally, protease subunit of a proteasome-like degradation complex believed to be a general protein degrading machinery. In Shouchella clausii (strain KSM-K16) (Alkalihalobacillus clausii), this protein is ATP-dependent protease subunit HslV.